The following is a 304-amino-acid chain: MDKENLYQEFVALMGEEHVFLEEPMKKHTSFKIGGPADLLVMPRTVEEIRQSVEICKKSKTPYFVMGNGSNLLVRDKGMRCVVIKIAENFNEVRFEGNHVIVQTGILLSTLSNQIARACLKGFEFANGIPGTVGGAITMNAGAYGGEMKDVVKSCKVLNHQGEIIDLSLEELELDYRTSIIQEKGYIALEVVLALQEGKYEEIRSIIDDLTVKRTTKQPLHLPCAGSVFKRPPGYFAGKLIQDCNLKGFKIGGAQVSELHSGFIVNIDNASAADVLNLIAHIQKQVKEKFDVGLHNEVRVVGEV.

Positions 33–198 constitute an FAD-binding PCMH-type domain; that stretch reads IGGPADLLVM…LEVVLALQEG (166 aa). Arg-177 is an active-site residue. Ser-227 acts as the Proton donor in catalysis. Residue Glu-297 is part of the active site.

It belongs to the MurB family. FAD is required as a cofactor.

The protein localises to the cytoplasm. It carries out the reaction UDP-N-acetyl-alpha-D-muramate + NADP(+) = UDP-N-acetyl-3-O-(1-carboxyvinyl)-alpha-D-glucosamine + NADPH + H(+). Its pathway is cell wall biogenesis; peptidoglycan biosynthesis. In terms of biological role, cell wall formation. This Alkaliphilus metalliredigens (strain QYMF) protein is UDP-N-acetylenolpyruvoylglucosamine reductase.